Here is a 3401-residue protein sequence, read N- to C-terminus: Genome polyprotein (3401 aa).

The Cytoplasmic portion of the chain corresponds to 1-104; it reads MPVRPRNKPK…GRKKRRSMTH (104 aa). The propeptide at 101–117 is ER anchor for the capsid protein C, removed in mature form by serine protease NS3; the sequence is SMTHGIILSLGVTMVIG. Residues 105-125 form a helical membrane-spanning segment; the sequence is GIILSLGVTMVIGASLHHHGG. The Extracellular portion of the chain corresponds to 126–240; that stretch reads RYLLNVTHAD…GERQIQRIER (115 aa). N-linked (GlcNAc...) asparagine; by host glycosylation is found at N130 and N146. A helical membrane pass occupies residues 241–261; that stretch reads WMMRNPFYAAISLLLAWWVGS. The Cytoplasmic segment spans residues 262–266; it reads DIKQK. A helical transmembrane segment spans residues 267–281; it reads VLIAFLVLAIGPAYS. The Extracellular segment spans residues 282 to 725; that stretch reads THCVGIPKRD…HTVFGNVFHS (444 aa). Cystine bridges form between C284-C311, C355-C386, C373-C397, C462-C564, and C581-C611. A fusion peptide region spans residues 379–392; the sequence is DRGWGNGCGLFGKG. Residues 726–746 form a helical membrane-spanning segment; the sequence is IFGGLSWITKIILGGMFLWLG. Residues 747-753 are Extracellular-facing; that stretch reads VNSRNQT. The chain crosses the membrane as a helical span at residues 754 to 774; sequence MCMVLMAVGGILLFMTLGVSG. Residues 775-1122 lie on the Extracellular side of the membrane; sequence EVGCSLDIKR…NVHEEHLVRS (348 aa). Intrachain disulfides connect C778–C789, C829–C916, C952–C997, C1054–C1103, C1065–C1087, and C1086–C1090. Residues N904 and N981 are each glycosylated (N-linked (GlcNAc...) asparagine; by host). A helical transmembrane segment spans residues 1123-1143; it reads WASAGTGMAESSLGLVALFLF. At 1144-1198 the chain is on the cytoplasmic side; it reads TDIFARKRMTRKFMVIGCLGVLSVMIVGGFTALDLIRYIIVVGQHFASMNHGGDV. Residues 1199–1219 traverse the membrane as a helical segment; the sequence is AYLAIIAVGKLRPGLLMMYSF. Residues 1220–1287 lie on the Lumenal side of the membrane; sequence KAAWSPKERV…PILALLTPLS (68 aa). The helical transmembrane segment at 1288-1308 threads the bilayer; that stretch reads MEIIRKTGIFACVGLLGLSLW. The Cytoplasmic portion of the chain corresponds to 1309 to 1352; sequence RGGDTTMRKGMPLLAGAATAASGLTRASLSVVFILCATAASRRS. Residues 1353–1373 traverse the membrane as a helical segment; the sequence is WPIGEIMAIVGIVGTGFGMAV. Over 1374 to 1376 the chain is Lumenal; the sequence is NDQ. Residues 1377 to 1397 traverse the membrane as a helical segment; sequence ASLAGPMLVFGLIMIVYATLG. Over 1398–1447 the chain is Cytoplasmic; sequence RADGLTLKRVGDITWEEEAVHSGSSTRYDVTLNEAGEFKLVHEEPVVWSH. The interval 1404–1443 is interacts with and activates NS3 protease; that stretch reads LKRVGDITWEEEAVHSGSSTRYDVTLNEAGEFKLVHEEPV. An intramembrane region (helical) is located at residues 1448–1468; that stretch reads VVFLVVALIAASVHPIALVVV. The Cytoplasmic portion of the chain corresponds to 1469–2154; the sequence is TIIWTYGKKH…ASTNAPEAVT (686 aa). The Peptidase S7 domain maps to 1481 to 1661; that stretch reads GGVLWDIPIA…GGEGVTEEPL (181 aa). Active-site charge relay system; for serine protease NS3 activity residues include H1532, D1556, and S1617. Residues 1665–1821 form the Helicase ATP-binding domain; it reads ATMLRKGKLT…ESNGEIEDLR (157 aa). The important for RNA-binding stretch occupies residues 1669–1672; that stretch reads RKGK. Residue 1678–1685 participates in ATP binding; that stretch reads YHPGAGKT. A DEAH box motif is present at residues 1769–1772; that stretch reads DEAH. Residues 1816–1995 enclose the Helicase C-terminal domain; it reads EIEDLRRDIP…GMVAPLYDVE (180 aa). The helical transmembrane segment at 2155–2175 threads the bilayer; the sequence is ILLMTGIVVACTLGVGLAFMW. Residues 2176–2181 lie on the Lumenal side of the membrane; that stretch reads PKGVDK. Residues 2182-2200 constitute an intramembrane region (helical); the sequence is MSMGMITMSIAGYLMLQGG. Position 2201 (L2201) is a topological domain, lumenal. Residues 2202-2222 form a helical membrane-spanning segment; the sequence is TPVQVASVLLIFFIFMVVLIP. At 2223-2235 the chain is on the cytoplasmic side; the sequence is EAGTQRSINDNKT. The chain crosses the membrane as a helical span at residues 2236–2250; that stretch reads LYVLLGVALLIGAIT. The Cytoplasmic portion of the chain corresponds to 2251 to 2285; sequence ANEMGYLEKTKRDLLGERVQNEWKLELPMFDLRPG. The helical intramembrane region spans 2286-2306; that stretch reads AAWSIYVGLATLVMPVLDHWI. Topologically, residues 2307–2354 are lumenal; it reads RTEYGSLSLTGIAQQASILQAMDKGVPFFKLNMSVIVLLVSVWNNFSM. The helical transmembrane segment at 2355-2375 threads the bilayer; sequence LSVLCGVGLLGVHCAFVLPGL. The Cytoplasmic portion of the chain corresponds to 2376–2418; sequence RAQAAKQAQRRVYHGVAKNPVVDGQTTAEIETAPEMPPLYEKK. The chain crosses the membrane as a helical span at residues 2419–2439; it reads LALVLLGVVAIANGVMVRSAF. The Lumenal portion of the chain corresponds to 2440–2467; the sequence is SMAETVVLLSAAVGPLLEGNTSAIWNGP. Residues 2468-2488 traverse the membrane as a helical segment; the sequence is MAVAMAGIMRGNYYAGIGLAY. Topologically, residues 2489-3401 are cytoplasmic; that stretch reads NLWILQSPKR…YSVQEVGTVL (913 aa). The mRNA cap 0-1 NS5-type MT domain occupies 2499 to 2763; sequence GRSTTMTLGE…DVVFPTGTRN (265 aa). S2554 provides a ligand contact to S-adenosyl-L-methionine. S2554 bears the Phosphoserine mark. K2559 acts as the For 2'-O-MTase activity in catalysis. Residues G2584, W2585, T2602, L2603, D2629, and V2630 each contribute to the S-adenosyl-L-methionine site. The For 2'-O-MTase activity role is filled by D2644. I2645 contributes to the S-adenosyl-L-methionine binding site. Residues K2680 and E2716 each act as for 2'-O-MTase activity in the active site. Y2718 serves as a coordination point for S-adenosyl-L-methionine. Residues 2869 to 2902 carry the Nuclear localization signal motif; sequence RAIMEVVNKWMFDFLAREKAPRICTKEEFINKVR. 4 residues coordinate Zn(2+): E2936, H2940, C2945, and C2948. The RdRp catalytic domain maps to 3026 to 3178; it reads GIMYADDTAG…APLDERFGLA (153 aa). The Zn(2+) site is built by H3213, C3229, and C3348.

This sequence in the N-terminal section; belongs to the class I-like SAM-binding methyltransferase superfamily. mRNA cap 0-1 NS5-type methyltransferase family. As to quaternary structure, homodimer. Interacts (via N-terminus) with host EXOC1 (via C-terminus); this interaction results in EXOC1 degradation through the proteasome degradation pathway. Forms heterodimers with envelope protein E in the endoplasmic reticulum and Golgi. In terms of assembly, homodimer; in the endoplasmic reticulum and Golgi. Interacts with protein prM. Interacts with non-structural protein 1. As to quaternary structure, homodimer; Homohexamer when secreted. Interacts with envelope protein E. NS1 interacts with NS4B. Interacts with host complement protein CFH; this interaction leads to the degradation of C3. Interacts (via N-terminus) with serine protease NS3. In terms of assembly, forms a heterodimer with serine protease NS3. May form homooligomers. As to quaternary structure, forms a heterodimer with NS2B. Interacts with non-structural protein 2A (via N-terminus). Interacts with NS4B. Interacts with unphosphorylated RNA-directed RNA polymerase NS5; this interaction stimulates RNA-directed RNA polymerase NS5 guanylyltransferase activity. NS3 interacts with host PDCD6IP; this interaction contributes to virion release. Interacts with serine protease NS3. In terms of assembly, homodimer. Interacts with host STAT2; this interaction prevents the establishment of cellular antiviral state. Interacts with serine protease NS3. Interacts with host TRIM23; this interaction leads to NS5 ubiquitination. Post-translationally, specific enzymatic cleavages in vivo yield mature proteins. The nascent capsid protein C contains a C-terminal hydrophobic domain that act as a signal sequence for translocation of prM into the lumen of the ER. Mature capsid protein C is cleaved at a site upstream of this hydrophobic domain by NS3. prM is cleaved in post-Golgi vesicles by a host furin, releasing the mature small envelope protein M, and peptide pr. Non-structural protein 2A-alpha, a C-terminally truncated form of non-structural protein 2A, results from partial cleavage by NS3. Specific enzymatic cleavages in vivo yield mature proteins peptide 2K acts as a signal sequence and is removed from the N-terminus of NS4B by the host signal peptidase in the ER lumen. Signal cleavage at the 2K-4B site requires a prior NS3 protease-mediated cleavage at the 4A-2K site. In terms of processing, cleaved in post-Golgi vesicles by a host furin, releasing the mature small envelope protein M, and peptide pr. This cleavage is incomplete as up to 30% of viral particles still carry uncleaved prM. N-glycosylated. Post-translationally, N-glycosylated. The excreted form is glycosylated and this is required for efficient secretion of the protein from infected cells. In terms of processing, polyubiquitinated; ubiquitination is probably mediated by host TRIM23 and is prerequisite for NS5-STAT2 interaction. NS5 is not ISGylated or sumoylated. Phosphorylated on serines residues. This phosphorylation may trigger NS5 nuclear localization.

The protein localises to the virion. Its subcellular location is the host nucleus. It localises to the host cytoplasm. It is found in the host perinuclear region. The protein resides in the virion membrane. The protein localises to the host endoplasmic reticulum membrane. Its subcellular location is the secreted. The catalysed reaction is Selective hydrolysis of -Xaa-Xaa-|-Yaa- bonds in which each of the Xaa can be either Arg or Lys and Yaa can be either Ser or Ala.. It carries out the reaction RNA(n) + a ribonucleoside 5'-triphosphate = RNA(n+1) + diphosphate. The enzyme catalyses a ribonucleoside 5'-triphosphate + H2O = a ribonucleoside 5'-diphosphate + phosphate + H(+). It catalyses the reaction ATP + H2O = ADP + phosphate + H(+). The catalysed reaction is a 5'-end (5'-triphosphoguanosine)-ribonucleoside in mRNA + S-adenosyl-L-methionine = a 5'-end (N(7)-methyl 5'-triphosphoguanosine)-ribonucleoside in mRNA + S-adenosyl-L-homocysteine. It carries out the reaction a 5'-end (N(7)-methyl 5'-triphosphoguanosine)-ribonucleoside in mRNA + S-adenosyl-L-methionine = a 5'-end (N(7)-methyl 5'-triphosphoguanosine)-(2'-O-methyl-ribonucleoside) in mRNA + S-adenosyl-L-homocysteine + H(+). Plays a role in virus budding by binding to the cell membrane and gathering the viral RNA into a nucleocapsid that forms the core of a mature virus particle. During virus entry, may induce genome penetration into the host cytoplasm after hemifusion induced by the surface proteins. Can migrate to the cell nucleus where it modulates host functions. In terms of biological role, inhibits RNA silencing by interfering with host Dicer. Functionally, prevents premature fusion activity of envelope proteins in trans-Golgi by binding to envelope protein E at pH6.0. After virion release in extracellular space, gets dissociated from E dimers. Its function is as follows. Acts as a chaperone for envelope protein E during intracellular virion assembly by masking and inactivating envelope protein E fusion peptide. prM is the only viral peptide matured by host furin in the trans-Golgi network probably to avoid catastrophic activation of the viral fusion activity in acidic Golgi compartment prior to virion release. prM-E cleavage is inefficient, and many virions are only partially matured. These uncleaved prM would play a role in immune evasion. May play a role in virus budding. Exerts cytotoxic effects by activating a mitochondrial apoptotic pathway through M ectodomain. May display a viroporin activity. In terms of biological role, binds to host cell surface receptor and mediates fusion between viral and cellular membranes. Envelope protein is synthesized in the endoplasmic reticulum in the form of heterodimer with protein prM. They play a role in virion budding in the ER, and the newly formed immature particle is covered with 60 spikes composed of heterodimer between precursor prM and envelope protein E. The virion is transported to the Golgi apparatus where the low pH causes dissociation of PrM-E heterodimers and formation of E homodimers. prM-E cleavage is inefficient, and many virions are only partially matured. These uncleaved prM would play a role in immune evasion. Functionally, involved in immune evasion, pathogenesis and viral replication. Once cleaved off the polyprotein, is targeted to three destinations: the viral replication cycle, the plasma membrane and the extracellular compartment. Essential for viral replication. Required for formation of the replication complex and recruitment of other non-structural proteins to the ER-derived membrane structures. Excreted as a hexameric lipoparticle that plays a role against host immune response. Antagonizing the complement function. Binds to the host macrophages and dendritic cells. Inhibits signal transduction originating from Toll-like receptor 3 (TLR3). Its function is as follows. Component of the viral RNA replication complex that functions in virion assembly and antagonizes the host immune response. Required cofactor for the serine protease function of NS3. May have membrane-destabilizing activity and form viroporins. In terms of biological role, displays three enzymatic activities: serine protease, NTPase and RNA helicase. NS3 serine protease, in association with NS2B, performs its autocleavage and cleaves the polyprotein at dibasic sites in the cytoplasm: C-prM, NS2A-NS2B, NS2B-NS3, NS3-NS4A, NS4A-2K and NS4B-NS5. NS3 RNA helicase binds RNA and unwinds dsRNA in the 3' to 5' direction. Also plays a role in virus assembly. Functionally, regulates the ATPase activity of the NS3 helicase activity. NS4A allows NS3 helicase to conserve energy during unwinding. Its function is as follows. Functions as a signal peptide for NS4B and is required for the interferon antagonism activity of the latter. Induces the formation of ER-derived membrane vesicles where the viral replication takes place. Inhibits interferon (IFN)-induced host STAT1 phosphorylation and nuclear translocation, thereby preventing the establishment of cellular antiviral state by blocking the IFN-alpha/beta pathway. In terms of biological role, replicates the viral (+) and (-) RNA genome, and performs the capping of genomes in the cytoplasm. NS5 methylates viral RNA cap at guanine N-7 and ribose 2'-O positions. Besides its role in RNA genome replication, also prevents the establishment of cellular antiviral state by blocking the interferon-alpha/beta (IFN-alpha/beta) signaling pathway. IFN-I induces binding of NS5 to host IFN-activated transcription factor STAT2, preventing its transcriptional activity. Host TRIM23 is the E3 ligase that interacts with and polyubiquitinates NS5 to promote its binding to STAT2 and trigger IFN-I signaling inhibition. This Edge Hill virus (EHV) protein is Genome polyprotein.